The sequence spans 733 residues: Cell division cycle protein 48 homolog AF_1297 (733 aa).

ATP-binding positions include 223–230 (GPPGTGKT) and 496–503 (GPPGTGKT).

Belongs to the AAA ATPase family. CDC48 subfamily.

This is Cell division cycle protein 48 homolog AF_1297 from Archaeoglobus fulgidus (strain ATCC 49558 / DSM 4304 / JCM 9628 / NBRC 100126 / VC-16).